The sequence spans 375 residues: Actin, cytoplasmic (375 aa).

It belongs to the actin family.

It is found in the cytoplasm. It localises to the cytoskeleton. It catalyses the reaction ATP + H2O = ADP + phosphate + H(+). In terms of biological role, actins are highly conserved proteins that are involved in various types of cell motility and are ubiquitously expressed in all eukaryotic cells. The protein is Actin, cytoplasmic of Oxytricha trifallax (Sterkiella histriomuscorum).